Here is a 222-residue protein sequence, read N- to C-terminus: Exosome complex component Rrp4 (222 aa).

One can recognise an S1 motif domain in the interval 63–131 (NDSVIGKVVD…EVKKVKLGLH (69 aa)). Residues 139–200 (EGGTLAYITP…EIVKRALEMI (62 aa)) enclose the KH domain.

It belongs to the RRP4 family. In terms of assembly, component of the archaeal exosome complex. Forms a trimer of Rrp4 and/or Csl4 subunits. The trimer associates with a hexameric ring-like arrangement composed of 3 Rrp41-Rrp42 heterodimers.

The protein resides in the cytoplasm. Non-catalytic component of the exosome, which is a complex involved in RNA degradation. Increases the RNA binding and the efficiency of RNA degradation. Confers strong poly(A) specificity to the exosome. This is Exosome complex component Rrp4 from Methanothermus fervidus (strain ATCC 43054 / DSM 2088 / JCM 10308 / V24 S).